The chain runs to 62 residues: Double zinc ribbon protein TK0111 (62 aa).

The Zn(2+) site is built by Cys-13, Cys-16, Cys-31, Cys-34, Cys-42, Cys-45, Cys-54, and Cys-57.

Crystallized in association with 70S ribosomes. Zn(2+) serves as cofactor.

The polypeptide is Double zinc ribbon protein TK0111 (Thermococcus kodakarensis (strain ATCC BAA-918 / JCM 12380 / KOD1) (Pyrococcus kodakaraensis (strain KOD1))).